Here is a 569-residue protein sequence, read N- to C-terminus: CTP synthase (569 aa).

Positions 1–272 (MARPKNVKHI…DSRVLKKLGI (272 aa)) are amidoligase domain. S18 contacts CTP. S18 is a binding site for UTP. 19–24 (SLGKGI) contributes to the ATP binding site. An L-glutamine-binding site is contributed by Y59. ATP is bound at residue D76. 2 residues coordinate Mg(2+): D76 and E146. Residues 153 to 155 (DIE), 193 to 198 (KTKPTQ), and K229 contribute to the CTP site. Residues 193–198 (KTKPTQ) and K229 each bind UTP. Residues 299-543 (TIGICGKYTE…VAAAKDYARG (245 aa)) enclose the Glutamine amidotransferase type-1 domain. G363 is a binding site for L-glutamine. C390 (nucleophile; for glutamine hydrolysis) is an active-site residue. L-glutamine-binding positions include 391–394 (LGMQ), E414, and R471. Active-site residues include H516 and E518.

It belongs to the CTP synthase family. As to quaternary structure, homotetramer.

The enzyme catalyses UTP + L-glutamine + ATP + H2O = CTP + L-glutamate + ADP + phosphate + 2 H(+). It catalyses the reaction L-glutamine + H2O = L-glutamate + NH4(+). The catalysed reaction is UTP + NH4(+) + ATP = CTP + ADP + phosphate + 2 H(+). Its pathway is pyrimidine metabolism; CTP biosynthesis via de novo pathway; CTP from UDP: step 2/2. Allosterically activated by GTP, when glutamine is the substrate; GTP has no effect on the reaction when ammonia is the substrate. The allosteric effector GTP functions by stabilizing the protein conformation that binds the tetrahedral intermediate(s) formed during glutamine hydrolysis. Inhibited by the product CTP, via allosteric rather than competitive inhibition. Catalyzes the ATP-dependent amination of UTP to CTP with either L-glutamine or ammonia as the source of nitrogen. Regulates intracellular CTP levels through interactions with the four ribonucleotide triphosphates. The chain is CTP synthase from Chlorobium chlorochromatii (strain CaD3).